The sequence spans 312 residues: PPSVESIGVCYGMSANNLPAASTVVSMFKFNGIKSMRLYAPNQAALQAVGGTGINVVVGAPNDVLSNLAASPAAAASWVKSNIQAYPKVSFRYVCVGNEVAGGATRNLVPAMKNVHGALVAAGLGHIKVTTSVSQAILGVFSPPSAGSFTGEAAAFMGPVVQFLARTNAPLMANIYPYLAWAYNPSAMDMGYALFNASGTVVRDGAYGYQNLFDTTVDAFYTAMGKHGGSSVKLVVSESGWPSGGGTAATPANARFYNQHLINHVGRGTPRHPGAIETYIFAMFNENQKDSGVEQNWGLFYPNMQHVYPINF.

A signal peptide spans 1–6 (PPSVES). Residue Glu99 is the Proton donor of the active site. N-linked (GlcNAc...) asparagine glycosylation is present at Asn196. Glu238 serves as the catalytic Nucleophile.

It belongs to the glycosyl hydrolase 17 family.

It catalyses the reaction Hydrolysis of (1-&gt;4)-beta-D-glucosidic linkages in beta-D-glucans containing (1-&gt;3)- and (1-&gt;4)-bonds.. It participates in glycan metabolism; beta-D-glucan degradation. Functions in plant cell wall hydrolysis during mobilization of the endosperm in germinating grain or during the growth of vegetative tissues. The protein is Lichenase-2 of Hordeum vulgare (Barley).